A 217-amino-acid chain; its full sequence is Small ribosomal subunit protein uS3 (217 aa).

Positions 38 to 106 (IRKFIDNELK…KVHINVIEIK (69 aa)) constitute a KH type-2 domain.

Belongs to the universal ribosomal protein uS3 family. Part of the 30S ribosomal subunit. Forms a tight complex with proteins S10 and S14.

Binds the lower part of the 30S subunit head. Binds mRNA in the 70S ribosome, positioning it for translation. The polypeptide is Small ribosomal subunit protein uS3 (Staphylococcus aureus (strain MSSA476)).